The chain runs to 360 residues: MFVARSIAADHKDLIHDVSFDFHGRRMATCSSDQSVKVWDKSENGDWHCTASWKTHSGSVWRVTWAHPEFGQVLASCSFDRTAAVWEEIVGESNDKLRGQSHWVKRTTLVDSRTSVTDVKFAPKHMGLMLATCSADGVVRIYEAPDVMNLSQWSLQHEISCKLSCSCISWNPSSSRAHSPMIAVGSDDSSPNIMGKVQIYEYNENTRKYAKAETLMSVSDPVHDIAFAPNLGRSFHILAVATKDVRIFTMKPLRKELSSSGGVTKFEIHTVAQFDNHNSQVWRVSWNITGTVLASSGDDGTVRLWKANYMDNWKCIGVLKGDGNPVGNSCQGIFGSSVGSAIQSLQNSVNGTSSSGRKHS.

WD repeat units lie at residues 10-49 (DHKD…DWHC), 55-96 (THSG…SNDK), 111-152 (DSRT…NLSQ), 160-210 (SCKL…RKYA), 217-258 (SVSD…KELS), and 276-315 (NHNS…NWKC).

It belongs to the WD repeat SEC13 family. In terms of assembly, component of the Nup107-160 subcomplex of the nuclear pore complex (NPC). The Nup107-160 subcomplex includes NUP160, NUP133, NUP107, NUP98, NUP85, NUP43, NUP37, SEH1 and SEC13. Component of the GATOR2 subcomplex, composed of MIOS, SEC13, SEH1L, WDR24 and WDR59. The GATOR2 complex interacts with CASTOR1 and CASTOR2; the interaction is negatively regulated by arginine. The GATOR2 complex interacts with SESN1, SESN2 and SESN3; the interaction is negatively regulated by amino acids.

The protein localises to the chromosome. Its subcellular location is the centromere. It localises to the kinetochore. It is found in the nucleus. The protein resides in the nuclear pore complex. The protein localises to the lysosome membrane. With respect to regulation, the GATOR2 complex is negatively regulated by the upstream amino acid sensors CASTOR1 and SESN2, which sequester the GATOR2 complex in absence of amino acids. In the presence of abundant amino acids, GATOR2 is released from CASTOR1 and SESN2 and activated. Component of the Nup107-160 subcomplex of the nuclear pore complex (NPC). The Nup107-160 subcomplex is required for the assembly of a functional NPC. The Nup107-160 subcomplex is also required for normal kinetochore microtubule attachment, mitotic progression and chromosome segregation. This subunit plays a role in recruitment of the Nup107-160 subcomplex to the kinetochore. In terms of biological role, as a component of the GATOR2 complex, functions as an activator of the amino acid-sensing branch of the mTORC1 signaling pathway. The GATOR2 complex indirectly activates mTORC1 through the inhibition of the GATOR1 subcomplex. GATOR2 probably acts as an E3 ubiquitin-protein ligase toward GATOR1. In the presence of abundant amino acids, the GATOR2 complex mediates ubiquitination of the NPRL2 core component of the GATOR1 complex, leading to GATOR1 inactivation. In the absence of amino acids, GATOR2 is inhibited, activating the GATOR1 complex. The chain is Nucleoporin SEH1 (seh1l) from Xenopus tropicalis (Western clawed frog).